A 410-amino-acid chain; its full sequence is MQIYKVGGAVRDRLLGRPVTDIDWVVVGASSDEMLARGYRPVGADFPVFLHPQSGEEYALARTERKSGRGYGGFTFHASPEVTLEEDLTRRDLTINAMAEDEQGRVIDPYGGQADLEARLLRHVSPAFAEDPLRVLRVARFAARYAGLGFRVAAETLALMRQLAESGELQALTPERSWKEISRALMEPNPEVFIQVLHDCGALAELIPEVEALFGVPQPAAHHPEIDTGVHVLSVLQQCARHRQPLSVRWACLLHDLGKGLTSEADWPRHIAHEARGVPLIDAVNQRFRVPRECQELARLVGEYHTHAHRALELRPNTLLELLQSFDVYRRPQRFEEFVAASEMDARGRLGLEQRDYPQAAYLLGAAQAARAVSVKPLVEKGLKGAELGEALKRARLAALKAYKEERGKA.

The ATP site is built by Gly-8 and Arg-11. The CTP site is built by Gly-8 and Arg-11. Residues Asp-21 and Asp-23 each contribute to the Mg(2+) site. ATP contacts are provided by Arg-91, Arg-137, and Arg-140. Residues Arg-91, Arg-137, and Arg-140 each contribute to the CTP site. In terms of domain architecture, HD spans Thr-228–Tyr-329.

Belongs to the tRNA nucleotidyltransferase/poly(A) polymerase family. Bacterial CCA-adding enzyme type 1 subfamily. In terms of assembly, monomer. Can also form homodimers and oligomers. Mg(2+) is required as a cofactor. Ni(2+) serves as cofactor.

It catalyses the reaction a tRNA precursor + 2 CTP + ATP = a tRNA with a 3' CCA end + 3 diphosphate. The catalysed reaction is a tRNA with a 3' CCA end + 2 CTP + ATP = a tRNA with a 3' CCACCA end + 3 diphosphate. In terms of biological role, catalyzes the addition and repair of the essential 3'-terminal CCA sequence in tRNAs without using a nucleic acid template. Adds these three nucleotides in the order of C, C, and A to the tRNA nucleotide-73, using CTP and ATP as substrates and producing inorganic pyrophosphate. tRNA 3'-terminal CCA addition is required both for tRNA processing and repair. Also involved in tRNA surveillance by mediating tandem CCA addition to generate a CCACCA at the 3' terminus of unstable tRNAs. While stable tRNAs receive only 3'-terminal CCA, unstable tRNAs are marked with CCACCA and rapidly degraded. The sequence is that of Multifunctional CCA protein from Pseudomonas aeruginosa (strain ATCC 15692 / DSM 22644 / CIP 104116 / JCM 14847 / LMG 12228 / 1C / PRS 101 / PAO1).